We begin with the raw amino-acid sequence, 365 residues long: Peptide chain release factor 2 (365 aa).

Glutamine 251 bears the N5-methylglutamine mark.

Belongs to the prokaryotic/mitochondrial release factor family. Post-translationally, methylated by PrmC. Methylation increases the termination efficiency of RF2.

The protein localises to the cytoplasm. Peptide chain release factor 2 directs the termination of translation in response to the peptide chain termination codons UGA and UAA. This Campylobacter jejuni (strain RM1221) protein is Peptide chain release factor 2.